A 546-amino-acid polypeptide reads, in one-letter code: NAD(P)H-quinone oxidoreductase chain 4 (546 aa).

The next 14 membrane-spanning stretches (helical) occupy residues 24–44 (FPWL…IPFF), 56–76 (FALS…INGF), 106–126 (ISMP…LAAW), 132–152 (PKLF…VFAV), 156–176 (LLFF…LAIW), 188–208 (FIIY…AMGF), 232–252 (ILCY…VPLH), 263–283 (TAPV…YALL), 297–317 (FAPL…LTSF), 326–346 (IAYS…SFSS), 352–372 (AMLQ…LVGA), 396–416 (FALW…SGFV), 437–457 (VVMA…LLSM), and 484–504 (VYII…PRLV).

This sequence belongs to the complex I subunit 4 family.

It is found in the cellular thylakoid membrane. It carries out the reaction a plastoquinone + NADH + (n+1) H(+)(in) = a plastoquinol + NAD(+) + n H(+)(out). The catalysed reaction is a plastoquinone + NADPH + (n+1) H(+)(in) = a plastoquinol + NADP(+) + n H(+)(out). In terms of biological role, NDH-1 shuttles electrons from NAD(P)H, via FMN and iron-sulfur (Fe-S) centers, to quinones in the respiratory chain. The immediate electron acceptor for the enzyme in this species is believed to be plastoquinone. Couples the redox reaction to proton translocation (for every two electrons transferred, four hydrogen ions are translocated across the cytoplasmic membrane), and thus conserves the redox energy in a proton gradient. The polypeptide is NAD(P)H-quinone oxidoreductase chain 4 (Prochlorococcus marinus (strain MIT 9515)).